A 200-amino-acid polypeptide reads, in one-letter code: Recombination protein RecR (200 aa).

The C4-type zinc finger occupies 57–72; it reads CRQCRTLTEQELCPQC. Positions 80 to 175 constitute a Toprim domain; it reads TQLCVVEGPM…VASRIAHGVP (96 aa).

It belongs to the RecR family.

Functionally, may play a role in DNA repair. It seems to be involved in an RecBC-independent recombinational process of DNA repair. It may act with RecF and RecO. This chain is Recombination protein RecR, found in Pseudomonas putida (strain W619).